The sequence spans 121 residues: Small ribosomal subunit protein uS13 (121 aa).

Residues 89–121 form a disordered region; that stretch reads MRHRRGLPVRGQNTKNNARTRKGKKVSIAGKKK. Basic residues predominate over residues 106 to 121; the sequence is ARTRKGKKVSIAGKKK.

Belongs to the universal ribosomal protein uS13 family. Part of the 30S ribosomal subunit. Forms a loose heterodimer with protein S19. Forms two bridges to the 50S subunit in the 70S ribosome.

Functionally, located at the top of the head of the 30S subunit, it contacts several helices of the 16S rRNA. In the 70S ribosome it contacts the 23S rRNA (bridge B1a) and protein L5 of the 50S subunit (bridge B1b), connecting the 2 subunits; these bridges are implicated in subunit movement. Contacts the tRNAs in the A and P-sites. This is Small ribosomal subunit protein uS13 from Latilactobacillus sakei subsp. sakei (strain 23K) (Lactobacillus sakei subsp. sakei).